A 1262-amino-acid chain; its full sequence is Protein stoned-B (1262 aa).

4 consecutive short sequence motifs (NPF) follow at residues 3-5 (NPF), 19-21 (NPF), 33-35 (NPF), and 43-45 (NPF). The segment at 17–36 (AANPFLMQSEPEPSSDNPFM) is disordered. A disordered region spans residues 49-189 (ADDLELGAEP…DVSVDSGSSA (141 aa)). The span at 50–60 (DDLELGAEPEA) shows a compositional bias: acidic residues. Residues 101 to 111 (PPQSQPQLQSH) are compositionally biased toward low complexity. Positions 115-124 (HPPPPRPLVP) are enriched in pro residues. A compositionally biased stretch (polar residues) spans 128–145 (TQDLISTVSSQLDETSSE). Over residues 172-189 (DSGLADLLDVSVDSGSSA) the composition is skewed to low complexity. The NPF 5 signature appears at 210–212 (NPF). 2 disordered regions span residues 225–452 (VPLP…SPPT) and 474–507 (EEMDTGLDFPLASSGQLSANPFASPDEEEPNFAP). The segment covering 233-272 (KQPPRPPPPRPAPPRPAPPGQAAPQRPPPPLAAVNPPPAA) has biased composition (pro residues). A compositionally biased stretch (acidic residues) spans 325–345 (DLDETIGEGEPPEQEEPDTEQ). The segment covering 384–401 (QVNNMAAPSGTASTQRAT) has biased composition (polar residues). The span at 417–429 (DDEDEPEAMQEPE) shows a compositional bias: acidic residues. Residues 493 to 495 (NPF) carry the NPF 6 motif. A phosphoserine mark is found at Ser623 and Ser626. The tract at residues 643–709 (SGVAPQLAPP…QDTPQTPLYD (67 aa)) is disordered. Residues 673 to 675 (NPF) carry the NPF 7 motif. The 175-residue stretch at 728 to 902 (GWEMQLRQPN…KIPALRERAL (175 aa)) folds into the SHD domain. Positions 847 to 1108 (KEFGSDLKKL…KGIERILGAV (262 aa)) are interaction with Syt. Residues 906-1219 (MEEVQVTAVD…ARHEYKVGIE (314 aa)) form the MHD domain. A disordered region spans residues 1226 to 1262 (TNAYLAATRPIREEPPTTATKPTASPVAPSDSDTDSN). Low complexity predominate over residues 1241 to 1254 (PTTATKPTASPVAP).

Belongs to the Stoned B family. Interacts with the second C2 domain of Syt.

It is found in the cytoplasm. It localises to the synapse. Adapter protein involved in endocytic recycling of synaptic vesicles membranes. May act by mediating the retrieval of synaptotagmin protein Syt from the plasma membrane, thereby facilitating the internalization of multiple synaptic vesicles from the plasma membrane. This chain is Protein stoned-B (stnB), found in Drosophila melanogaster (Fruit fly).